The chain runs to 415 residues: Imidazolonepropionase (415 aa).

Fe(3+)-binding residues include His83 and His85. Positions 83 and 85 each coordinate Zn(2+). The 4-imidazolone-5-propanoate site is built by Arg92, Tyr155, and His188. Tyr155 contacts N-formimidoyl-L-glutamate. His250 is a binding site for Fe(3+). Residue His250 participates in Zn(2+) binding. Gln253 serves as a coordination point for 4-imidazolone-5-propanoate. Asp324 contacts Fe(3+). A Zn(2+)-binding site is contributed by Asp324. Positions 326 and 328 each coordinate N-formimidoyl-L-glutamate. Position 329 (Ser329) interacts with 4-imidazolone-5-propanoate.

This sequence belongs to the metallo-dependent hydrolases superfamily. HutI family. Zn(2+) serves as cofactor. It depends on Fe(3+) as a cofactor.

It localises to the cytoplasm. It catalyses the reaction 4-imidazolone-5-propanoate + H2O = N-formimidoyl-L-glutamate. It participates in amino-acid degradation; L-histidine degradation into L-glutamate; N-formimidoyl-L-glutamate from L-histidine: step 3/3. Functionally, catalyzes the hydrolytic cleavage of the carbon-nitrogen bond in imidazolone-5-propanoate to yield N-formimidoyl-L-glutamate. It is the third step in the universal histidine degradation pathway. This chain is Imidazolonepropionase, found in Rubrobacter xylanophilus (strain DSM 9941 / JCM 11954 / NBRC 16129 / PRD-1).